The following is a 370-amino-acid chain: Leucine-rich repeat-containing protein 19 (370 aa).

An N-terminal signal peptide occupies residues 1–24 (MKVTGITILFWPLSMILLSDKIQS). Residues 25–270 (SKREVQCNFT…SEHEPLGKSW (246 aa)) lie on the Extracellular side of the membrane. 4 N-linked (GlcNAc...) asparagine glycosylation sites follow: asparagine 32, asparagine 37, asparagine 62, and asparagine 95. LRR repeat units lie at residues 46–71 (KKDVTILDLSYNQITLNGTDTRVLQT), 72–95 (YFLLTELYLIENKVTILHNNGFGN), 96–119 (LSSLEILNICRNSIYVIQQGAFLG), 120–143 (LNKLKQLYLCQNKIEQLNADVFVP), and 145–168 (RSLKLLNLQGNLISYLDVPPLFHL). Residues 176–227 (NLWNCSCSLFNLQNWLNTSNVTLENENITMCSYPNSLQSYNIKTVPHKAECH) enclose the LRRCT domain. Residues asparagine 179, asparagine 192, asparagine 195, asparagine 202, asparagine 251, and asparagine 256 are each glycosylated (N-linked (GlcNAc...) asparagine). The helical transmembrane segment at 271 to 291 (AFLVGVVVTVLTTSLLIFIAI) threads the bilayer. The Cytoplasmic segment spans residues 292–370 (KCPIWYNILL…IDIHELCEEN (79 aa)).

Interacts with TRAF2 and TRAF6. Expressed in renal collecting duct epithelial cells.

The protein localises to the membrane. With respect to regulation, activated by TLR ligands such as LPS, bacterial DNA and peptidoglycan. Its function is as follows. Pathogen-recognition receptor which mediates the activation of TRAF2- and TRAF6 NF-kappa-B signaling pathways and induces the expression of pro-inflammatory cytokines. In kidney, prevents infection by uropathogenic bacteria by inducing the production of cytokines, chemokines and antimicrobial substances. In gut, involved in host-microbiota interactions, plays a critical role in promoting the recruitment of immune cells and intestinal inflammation. In Homo sapiens (Human), this protein is Leucine-rich repeat-containing protein 19.